The sequence spans 89 residues: Small ribosomal subunit protein uS15 (89 aa).

The protein belongs to the universal ribosomal protein uS15 family. Part of the 30S ribosomal subunit. Forms a bridge to the 50S subunit in the 70S ribosome, contacting the 23S rRNA.

One of the primary rRNA binding proteins, it binds directly to 16S rRNA where it helps nucleate assembly of the platform of the 30S subunit by binding and bridging several RNA helices of the 16S rRNA. Its function is as follows. Forms an intersubunit bridge (bridge B4) with the 23S rRNA of the 50S subunit in the ribosome. This chain is Small ribosomal subunit protein uS15, found in Gloeobacter violaceus (strain ATCC 29082 / PCC 7421).